Reading from the N-terminus, the 151-residue chain is Ribosome maturation factor RimP (151 aa).

Belongs to the RimP family.

The protein localises to the cytoplasm. In terms of biological role, required for maturation of 30S ribosomal subunits. The chain is Ribosome maturation factor RimP from Aliivibrio fischeri (strain ATCC 700601 / ES114) (Vibrio fischeri).